A 345-amino-acid chain; its full sequence is Phenylalanine--tRNA ligase alpha subunit (345 aa).

Glutamate 266 is a binding site for Mg(2+).

Belongs to the class-II aminoacyl-tRNA synthetase family. Phe-tRNA synthetase alpha subunit type 1 subfamily. As to quaternary structure, tetramer of two alpha and two beta subunits. The cofactor is Mg(2+).

The protein localises to the cytoplasm. The catalysed reaction is tRNA(Phe) + L-phenylalanine + ATP = L-phenylalanyl-tRNA(Phe) + AMP + diphosphate + H(+). This Burkholderia lata (strain ATCC 17760 / DSM 23089 / LMG 22485 / NCIMB 9086 / R18194 / 383) protein is Phenylalanine--tRNA ligase alpha subunit.